A 66-amino-acid polypeptide reads, in one-letter code: Large ribosomal subunit protein uL29 (66 aa).

It belongs to the universal ribosomal protein uL29 family.

The protein is Large ribosomal subunit protein uL29 of Thermosipho africanus (strain TCF52B).